A 226-amino-acid polypeptide reads, in one-letter code: PKHD-type hydroxylase PiuC (226 aa).

The Fe2OG dioxygenase domain maps to 78–178 (KVFPPLFNCY…RYASFFWTQS (101 aa)). Fe cation is bound by residues H96, D98, and H159. Residue R169 participates in 2-oxoglutarate binding.

The cofactor is Fe(2+). L-ascorbate is required as a cofactor.

The sequence is that of PKHD-type hydroxylase PiuC (piuC) from Pseudomonas aeruginosa (strain ATCC 15692 / DSM 22644 / CIP 104116 / JCM 14847 / LMG 12228 / 1C / PRS 101 / PAO1).